The sequence spans 411 residues: 3-phosphoshikimate 1-carboxyvinyltransferase (411 aa).

3-phosphoshikimate is bound by residues lysine 20, serine 21, and arginine 25. Lysine 20 contacts phosphoenolpyruvate. Phosphoenolpyruvate contacts are provided by glycine 86 and arginine 114. 6 residues coordinate 3-phosphoshikimate: serine 156, serine 157, glutamine 158, serine 181, aspartate 295, and lysine 322. Glutamine 158 provides a ligand contact to phosphoenolpyruvate. Aspartate 295 (proton acceptor) is an active-site residue. Phosphoenolpyruvate is bound by residues arginine 326, arginine 367, and lysine 393.

The protein belongs to the EPSP synthase family. Monomer.

The protein localises to the cytoplasm. It catalyses the reaction 3-phosphoshikimate + phosphoenolpyruvate = 5-O-(1-carboxyvinyl)-3-phosphoshikimate + phosphate. It participates in metabolic intermediate biosynthesis; chorismate biosynthesis. Catalyzes the transfer of the enolpyruvyl moiety of phosphoenolpyruvate (PEP) to the 5-hydroxyl of shikimate-3-phosphate (S3P) to produce enolpyruvyl shikimate-3-phosphate and inorganic phosphate. The sequence is that of 3-phosphoshikimate 1-carboxyvinyltransferase from Picrophilus torridus (strain ATCC 700027 / DSM 9790 / JCM 10055 / NBRC 100828 / KAW 2/3).